A 108-amino-acid chain; its full sequence is Large ribosomal subunit protein uL24 (108 aa).

The protein belongs to the universal ribosomal protein uL24 family. Part of the 50S ribosomal subunit.

Functionally, one of two assembly initiator proteins, it binds directly to the 5'-end of the 23S rRNA, where it nucleates assembly of the 50S subunit. In terms of biological role, one of the proteins that surrounds the polypeptide exit tunnel on the outside of the subunit. This is Large ribosomal subunit protein uL24 from Moorella thermoacetica (strain ATCC 39073 / JCM 9320).